Here is a 424-residue protein sequence, read N- to C-terminus: Caspase-2 (424 aa).

Residues 1–140 constitute a propeptide that is removed on maturation; that stretch reads MLGACGMQRY…IVEHSLDSGD (140 aa). One can recognise a CARD domain in the interval 7-96; that stretch reads MQRYHQEALK…QHLAEMILKT (90 aa). Active-site residues include H248 and C291. Residues 296–310 are compositionally biased toward basic and acidic residues; it reads TDRGVDQRDGKERSD. Positions 296 to 325 are disordered; it reads TDRGVDQRDGKERSDSPGCEESDANKEENL.

It belongs to the peptidase C14A family. In terms of assembly, heterotetramer that consists of two anti-parallel arranged heterodimers, each one formed by a p18 subunit and a p12 subunit.

It catalyses the reaction Strict requirement for an Asp residue at P1, with 316-Asp being essential for proteolytic activity and has a preferred cleavage sequence of Val-Asp-Val-Ala-Asp-|-.. Functionally, involved in the activation cascade of caspases responsible for apoptosis execution. Might function by either activating some proteins required for cell death or inactivating proteins necessary for cell survival. This chain is Caspase-2 (CASP2), found in Gallus gallus (Chicken).